Consider the following 514-residue polypeptide: H/ACA ribonucleoprotein complex subunit DKC1 (514 aa).

At Ala2 the chain carries N-acetylalanine. The segment at 2–21 (ADAEVIILPKKHKKKKERKS) is nucleolar localization. Residue Lys20 forms a Glycyl lysine isopeptide (Lys-Gly) (interchain with G-Cter in SUMO2) linkage. Phosphoserine is present on Ser21. Glycyl lysine isopeptide (Lys-Gly) (interchain with G-Cter in SUMO2) cross-links involve residues Lys39 and Lys43. Asp125 serves as the catalytic Nucleophile. Lys191 participates in a covalent cross-link: Glycyl lysine isopeptide (Lys-Gly) (interchain with G-Cter in SUMO2). Residues 296 to 371 (HKRLVMKDSA…IVAKIKRVIM (76 aa)) form the PUA domain. Residue Ser387 is modified to Phosphoserine. Lys394 participates in a covalent cross-link: Glycyl lysine isopeptide (Lys-Gly) (interchain with G-Cter in SUMO2). Residue Lys413 forms a Glycyl lysine isopeptide (Lys-Gly) (interchain with G-Cter in SUMO1); alternate linkage. Residue Lys413 forms a Glycyl lysine isopeptide (Lys-Gly) (interchain with G-Cter in SUMO2); alternate linkage. Residues Lys424 and Lys433 each participate in a glycyl lysine isopeptide (Lys-Gly) (interchain with G-Cter in SUMO2) cross-link. A disordered region spans residues 443–514 (KTAKRKRESE…KAKEVELVSE (72 aa)). A nuclear and nucleolar localization region spans residues 446–514 (KRKRESESES…KAKEVELVSE (69 aa)). A phosphoserine mark is found at Ser451, Ser453, and Ser455. Thr458 bears the Phosphothreonine mark. A Glycyl lysine isopeptide (Lys-Gly) (interchain with G-Cter in SUMO2) cross-link involves residue Lys467. Over residues 468–480 (KEKKKSKKDKKAK) the composition is skewed to basic residues. Ser485, Ser494, and Ser513 each carry phosphoserine.

This sequence belongs to the pseudouridine synthase TruB family. As to quaternary structure, part of the H/ACA small nucleolar ribonucleoprotein (H/ACA snoRNP) complex, which contains NHP2/NOLA2, GAR1/NOLA1, NOP10/NOLA3, and DKC1/NOLA4, which is presumed to be the catalytic subunit. The complex contains a stable core formed by binding of one or two NOP10-DKC1 heterodimers to NHP2; GAR1 subsequently binds to this core via DKC1. The complex binds a box H/ACA small nucleolar RNA (snoRNA), which may target the specific site of modification within the RNA substrate. During assembly, the complex contains NAF1 instead of GAR1/NOLA1. The complex also interacts with TERC, which contains a 3'-terminal domain related to the box H/ACA snoRNAs. Specific interactions with snoRNAs or TERC are mediated by GAR1 and NHP2. Associates with NOLC1/NOPP140. H/ACA snoRNPs interact with the SMN complex, consisting of SMN1 or SMN2, GEMIN2/SIP1, DDX20/GEMIN3, and GEMIN4. This is mediated by interaction between GAR1 and SMN1 or SMN2. The SMN complex may be required for correct assembly of the H/ACA snoRNP complex. Component of the telomerase holoenzyme complex composed of one molecule of TERT, one molecule of WRAP53/TCAB1, two molecules of H/ACA ribonucleoprotein complex subunits DKC1, NOP10, NHP2 and GAR1, and a telomerase RNA template component (TERC). The telomerase holoenzyme complex is associated with TEP1, SMG6/EST1A and POT1. Interacts with SHQ1; this interaction may lead to the stabilization of DKC1, from the time of its synthesis until its association with NOP10, NHP2, and NAF1 at the nascent H/ACA RNA. Interacts with HMBOX1. Interacts with DHX36. Ubiquitously expressed.

The protein localises to the nucleus. The protein resides in the nucleolus. Its subcellular location is the cajal body. It is found in the cytoplasm. The catalysed reaction is uridine in 5S rRNA = pseudouridine in 5S rRNA. Functionally, catalytic subunit of H/ACA small nucleolar ribonucleoprotein (H/ACA snoRNP) complex, which catalyzes pseudouridylation of rRNA. This involves the isomerization of uridine such that the ribose is subsequently attached to C5, instead of the normal N1. Each rRNA can contain up to 100 pseudouridine ('psi') residues, which may serve to stabilize the conformation of rRNAs. Required for ribosome biogenesis and telomere maintenance. Also required for correct processing or intranuclear trafficking of TERC, the RNA component of the telomerase reverse transcriptase (TERT) holoenzyme. In terms of biological role, promotes cell to cell and cell to substratum adhesion, increases the cell proliferation rate and leads to cytokeratin hyper-expression. This chain is H/ACA ribonucleoprotein complex subunit DKC1, found in Homo sapiens (Human).